The following is a 116-amino-acid chain: Large ribosomal subunit protein bL20 (116 aa).

It belongs to the bacterial ribosomal protein bL20 family.

Its function is as follows. Binds directly to 23S ribosomal RNA and is necessary for the in vitro assembly process of the 50S ribosomal subunit. It is not involved in the protein synthesizing functions of that subunit. This is Large ribosomal subunit protein bL20 from Fusobacterium nucleatum subsp. nucleatum (strain ATCC 25586 / DSM 15643 / BCRC 10681 / CIP 101130 / JCM 8532 / KCTC 2640 / LMG 13131 / VPI 4355).